We begin with the raw amino-acid sequence, 114 residues long: Non-specific lipid-transfer protein 2 (114 aa).

The N-terminal stretch at 1-23 (MEMFGKIACFVVFCMVVVAPHAE) is a signal peptide. 4 disulfide bridges follow: Cys-27-Cys-73, Cys-37-Cys-50, Cys-51-Cys-96, and Cys-71-Cys-110.

This sequence belongs to the plant LTP family.

Functionally, plant non-specific lipid-transfer proteins transfer phospholipids as well as galactolipids across membranes. May play a role in wax or cutin deposition in the cell walls of expanding epidermal cells and certain secretory tissues. This is Non-specific lipid-transfer protein 2 (LE16) from Solanum lycopersicum (Tomato).